The sequence spans 376 residues: Glucose-1-phosphate adenylyltransferase (376 aa).

Alpha-D-glucose 1-phosphate-binding positions include tyrosine 101, glycine 166, glutamate 181–lysine 182, and serine 192.

Belongs to the bacterial/plant glucose-1-phosphate adenylyltransferase family. As to quaternary structure, homotetramer.

The enzyme catalyses alpha-D-glucose 1-phosphate + ATP + H(+) = ADP-alpha-D-glucose + diphosphate. It participates in glycan biosynthesis; glycogen biosynthesis. In terms of biological role, involved in the biosynthesis of ADP-glucose, a building block required for the elongation reactions to produce glycogen. Catalyzes the reaction between ATP and alpha-D-glucose 1-phosphate (G1P) to produce pyrophosphate and ADP-Glc. This Bacillus cytotoxicus (strain DSM 22905 / CIP 110041 / 391-98 / NVH 391-98) protein is Glucose-1-phosphate adenylyltransferase.